The primary structure comprises 156 residues: Ribosomal RNA large subunit methyltransferase H (156 aa).

S-adenosyl-L-methionine-binding positions include Leu-73, Gly-104, and Leu-123–Leu-128.

It belongs to the RNA methyltransferase RlmH family. As to quaternary structure, homodimer.

It localises to the cytoplasm. The enzyme catalyses pseudouridine(1915) in 23S rRNA + S-adenosyl-L-methionine = N(3)-methylpseudouridine(1915) in 23S rRNA + S-adenosyl-L-homocysteine + H(+). In terms of biological role, specifically methylates the pseudouridine at position 1915 (m3Psi1915) in 23S rRNA. This is Ribosomal RNA large subunit methyltransferase H from Hydrogenovibrio crunogenus (strain DSM 25203 / XCL-2) (Thiomicrospira crunogena).